The sequence spans 175 residues: Protein SELF-PRUNING (175 aa).

It belongs to the phosphatidylethanolamine-binding protein family.

Its subcellular location is the cytoplasm. In terms of biological role, not known. In plants homozygous for the recessive allele of the SP gene, sympodial segments develop progressively fewer nodes until the shoot is terminated by two consecutive. inflorescences. The protein is Protein SELF-PRUNING (SP) of Solanum lycopersicum (Tomato).